We begin with the raw amino-acid sequence, 375 residues long: Succinyl-diaminopimelate desuccinylase (375 aa).

H66 contacts Zn(2+). Residue D68 is part of the active site. D99 contributes to the Zn(2+) binding site. The active-site Proton acceptor is E133. Positions 134, 162, and 348 each coordinate Zn(2+).

This sequence belongs to the peptidase M20A family. DapE subfamily. As to quaternary structure, homodimer. Zn(2+) serves as cofactor. Co(2+) is required as a cofactor.

It carries out the reaction N-succinyl-(2S,6S)-2,6-diaminopimelate + H2O = (2S,6S)-2,6-diaminopimelate + succinate. The protein operates within amino-acid biosynthesis; L-lysine biosynthesis via DAP pathway; LL-2,6-diaminopimelate from (S)-tetrahydrodipicolinate (succinylase route): step 3/3. Functionally, catalyzes the hydrolysis of N-succinyl-L,L-diaminopimelic acid (SDAP), forming succinate and LL-2,6-diaminopimelate (DAP), an intermediate involved in the bacterial biosynthesis of lysine and meso-diaminopimelic acid, an essential component of bacterial cell walls. This chain is Succinyl-diaminopimelate desuccinylase, found in Escherichia coli O7:K1 (strain IAI39 / ExPEC).